Consider the following 361-residue polypeptide: uncharacterized protein (361 aa).

This is an uncharacterized protein from Escherichia coli (strain K12).